We begin with the raw amino-acid sequence, 417 residues long: BSD domain-containing protein 1-B (417 aa).

Residues 153 to 205 form the BSD domain; sequence WLAYWDPEQRKAEISEPLVTSPSIRALFTKMVPAAVSHSEFWQRYFYKVHQLE. Disordered stretches follow at residues 215-234, 262-292, and 323-390; these read KQRA…EEEE, HVED…SISP, and AAET…DFDM. Positions 262-278 are enriched in basic and acidic residues; the sequence is HVEDKSEKTAELNRDHT. The span at 281–292 shows a compositional bias: low complexity; it reads TSPSESSESISP. Polar residues predominate over residues 332 to 343; the sequence is PVEQTGKSNAQM. Over residues 345–356 the composition is skewed to basic and acidic residues; that stretch reads THREDPPSDLRV. Over residues 360-379 the composition is skewed to polar residues; sequence NSDSGKSTPSNNGQKGSSTD. Positions 380 to 390 are enriched in acidic residues; that stretch reads VSEDWEKDFDM.

This chain is BSD domain-containing protein 1-B (bsdc1-b), found in Xenopus laevis (African clawed frog).